Reading from the N-terminus, the 213-residue chain is 3,4-dihydroxy-2-butanone 4-phosphate synthase (213 aa).

Residues 37–38, Asp-42, 150–154, and Glu-174 contribute to the D-ribulose 5-phosphate site; these read RE and RAGHT. Glu-38 is a Mg(2+) binding site. His-153 is a binding site for Mg(2+).

Belongs to the DHBP synthase family. In terms of assembly, homodimer. The cofactor is Mg(2+). Mn(2+) serves as cofactor.

It catalyses the reaction D-ribulose 5-phosphate = (2S)-2-hydroxy-3-oxobutyl phosphate + formate + H(+). It functions in the pathway cofactor biosynthesis; riboflavin biosynthesis; 2-hydroxy-3-oxobutyl phosphate from D-ribulose 5-phosphate: step 1/1. Catalyzes the conversion of D-ribulose 5-phosphate to formate and 3,4-dihydroxy-2-butanone 4-phosphate. This Buchnera aphidicola subsp. Schizaphis graminum (strain Sg) protein is 3,4-dihydroxy-2-butanone 4-phosphate synthase.